The following is a 264-amino-acid chain: Phycocyanobilin:ferredoxin oxidoreductase (264 aa).

It belongs to the HY2 family.

It catalyses the reaction (2R,3Z)-phycocyanobilin + 4 oxidized [2Fe-2S]-[ferredoxin] = biliverdin IXalpha + 4 reduced [2Fe-2S]-[ferredoxin] + 4 H(+). In terms of biological role, catalyzes the four-electron reduction of biliverdin IX-alpha (2-electron reduction at both the A and D rings); the reaction proceeds via an isolatable 2-electron intermediate, 181,182-dihydrobiliverdin. This chain is Phycocyanobilin:ferredoxin oxidoreductase (pcyA), found in Prochlorococcus marinus (strain MIT 9313).